Here is a 222-residue protein sequence, read N- to C-terminus: UPF0758 protein CT0611 (222 aa).

An MPN domain is found at 100–222 (KVKGARDVFE…WFSFRDHALL (123 aa)). Positions 171, 173, and 184 each coordinate Zn(2+). The JAMM motif motif lies at 171-184 (HNHPSGDVQPSNAD).

The protein belongs to the UPF0758 family.

In Chlorobaculum tepidum (strain ATCC 49652 / DSM 12025 / NBRC 103806 / TLS) (Chlorobium tepidum), this protein is UPF0758 protein CT0611.